We begin with the raw amino-acid sequence, 201 residues long: Two-component response regulator ORR10 (201 aa).

Positions 10 to 142 (HVLAVDDSLP…DMSKLKPHIL (133 aa)) constitute a Response regulatory domain. At Asp-75 the chain carries 4-aspartylphosphate. Residues 149 to 201 (HYQQEQHLQSNSESNNSSNPTSENSSSSTSTNSHKRKAVDEEILPHTIRPRHS) are disordered. Residues 158–180 (SNSESNNSSNPTSENSSSSTSTN) are compositionally biased toward low complexity.

It belongs to the ARR family. Type-A subfamily. In terms of processing, two-component system major event consists of a His-to-Asp phosphorelay between a sensor histidine kinase (HK) and a response regulator (RR). In plants, the His-to-Asp phosphorelay involves an additional intermediate named Histidine-containing phosphotransfer protein (HPt). This multistep phosphorelay consists of a His-Asp-His-Asp sequential transfer of a phosphate group between first a His and an Asp of the HK protein, followed by the transfer to a conserved His of the HPt protein and finally the transfer to an Asp in the receiver domain of the RR protein. In terms of tissue distribution, expressed in mature leaves, and at low levels in roots, shoots and flowers.

In terms of biological role, functions as a response regulator involved in His-to-Asp phosphorelay signal transduction system. Phosphorylation of the Asp residue in the receiver domain activates the ability of the protein to promote the transcription of target genes. Type-A response regulators seem to act as negative regulators of the cytokinin signaling. This chain is Two-component response regulator ORR10, found in Oryza sativa subsp. indica (Rice).